The primary structure comprises 425 residues: Dihydroorotase (425 aa).

Positions 59 and 61 each coordinate Zn(2+). Residues 61 to 63 (HLR) and Asn-93 contribute to the substrate site. The Zn(2+) site is built by Asp-151, His-178, and His-231. Position 277 (Asn-277) interacts with substrate. Asp-304 provides a ligand contact to Zn(2+). Asp-304 is an active-site residue. Residues His-308 and 322-323 (FG) contribute to the substrate site.

The protein belongs to the metallo-dependent hydrolases superfamily. DHOase family. Class I DHOase subfamily. Requires Zn(2+) as cofactor.

The enzyme catalyses (S)-dihydroorotate + H2O = N-carbamoyl-L-aspartate + H(+). It functions in the pathway pyrimidine metabolism; UMP biosynthesis via de novo pathway; (S)-dihydroorotate from bicarbonate: step 3/3. In terms of biological role, catalyzes the reversible cyclization of carbamoyl aspartate to dihydroorotate. The polypeptide is Dihydroorotase (Staphylococcus epidermidis (strain ATCC 35984 / DSM 28319 / BCRC 17069 / CCUG 31568 / BM 3577 / RP62A)).